A 249-amino-acid polypeptide reads, in one-letter code: Diaminopimelate epimerase (249 aa).

Residues Asn-11 and Asn-60 each coordinate substrate. The active-site Proton donor is Cys-69. Residues 70-71 (GN), Asn-164, and 182-183 (ER) each bind substrate. Cys-192 functions as the Proton acceptor in the catalytic mechanism. 193-194 (GT) lines the substrate pocket.

Belongs to the diaminopimelate epimerase family. Homodimer.

Its subcellular location is the cytoplasm. It carries out the reaction (2S,6S)-2,6-diaminopimelate = meso-2,6-diaminopimelate. It functions in the pathway amino-acid biosynthesis; L-lysine biosynthesis via DAP pathway; DL-2,6-diaminopimelate from LL-2,6-diaminopimelate: step 1/1. Functionally, catalyzes the stereoinversion of LL-2,6-diaminopimelate (L,L-DAP) to meso-diaminopimelate (meso-DAP), a precursor of L-lysine and an essential component of the bacterial peptidoglycan. This is Diaminopimelate epimerase from Campylobacter jejuni subsp. jejuni serotype O:2 (strain ATCC 700819 / NCTC 11168).